The following is a 794-amino-acid chain: Elongator complex protein 2 (794 aa).

WD repeat units lie at residues 55 to 93, 98 to 140, 147 to 188, 203 to 244, 286 to 328, 337 to 376, 384 to 423, 433 to 472, 557 to 601, 604 to 643, 654 to 693, 705 to 751, and 759 to 794; these read EHTK…TTKS, GHTS…YVCF, DGFC…AGEG, GHED…KEQM, GHEG…IWLE, GNSV…PQLW, GHYG…GANP, IHGY…ENFR, GHGY…QIQK, GHQL…VSYQ, VHTR…KESS, LKNE…WKLL, and AHHL…IKLT.

The protein belongs to the WD repeat ELP2 family. As to quaternary structure, component of the elongator complex composed of Elp1, Elp2, Elp3, Elp4, Elp5 and Elp6. The elongator complex associates with and stabilizes microtubules; efficient interaction requires the full complex.

It is found in the cytoplasm. The protein localises to the nucleus. Its subcellular location is the cytoskeleton. It localises to the spindle. It functions in the pathway tRNA modification; 5-methoxycarbonylmethyl-2-thiouridine-tRNA biosynthesis. Functionally, component of the elongator complex, which is required for multiple tRNA modifications, including mcm5U (5-methoxycarbonylmethyl uridine), mcm5s2U (5-methoxycarbonylmethyl-2-thiouridine), and ncm5U (5-carbamoylmethyl uridine). The elongator complex catalyzes the formation of carboxymethyluridine in the wobble base at position 34 in tRNAs. Binding by the elongator complex stabilizes microtubules and promotes their growth. This induces central spindle asymmetry, promoting polarized signaling endosome trafficking during asymmetric cell division and cell fate assignation of sensory organ precursor cells. Involved in the regulation of the STAT pathway. The sequence is that of Elongator complex protein 2 from Drosophila melanogaster (Fruit fly).